A 77-amino-acid chain; its full sequence is Cell division topological specificity factor (77 aa).

It belongs to the MinE family.

In terms of biological role, prevents the cell division inhibition by proteins MinC and MinD at internal division sites while permitting inhibition at polar sites. This ensures cell division at the proper site by restricting the formation of a division septum at the midpoint of the long axis of the cell. In Helicobacter pylori (strain HPAG1), this protein is Cell division topological specificity factor.